Reading from the N-terminus, the 1023-residue chain is DNA polymerase (1023 aa).

A disordered region spans residues 726–751 (QTDATRKHRQCTPTSNSSSDEDAPFY).

It belongs to the DNA polymerase type-B family. Heterodimer with the terminal protein; this heterodimer binds to bp 9 to 18 of the genome. Forms a complex with viral pTP, DBP and hosts NFIA and POU2F1/OCT1 for initiation of replication.

It is found in the host nucleus. It carries out the reaction DNA(n) + a 2'-deoxyribonucleoside 5'-triphosphate = DNA(n+1) + diphosphate. Functionally, eukaryotic-type DNA polymerase involved in viral genomic replication. DNA synthesis is protein primed, and acts in a strand displacement replication. Assembles in complex with viral pTP, DBP, host NFIA and host POU2F1/OCT1 on viral origin of replication. The polymerase covalently transfers dCMP onto pTP, thereby initiating complementary strand synthesis. The protein is DNA polymerase of Bovine adenovirus B serotype 3 (BAdV-3).